Consider the following 318-residue polypeptide: Mediator of RNA polymerase II transcription subunit 3 (318 aa).

Positions 134–156 (SAAGITKTSSGNDGNTTGSTANT) are enriched in polar residues. The interval 134-225 (SAAGITKTSS…PSLKQIPNTQ (92 aa)) is disordered. Low complexity predominate over residues 192 to 217 (HTGPATAPTTSNSAASAAAAAANTPS).

This sequence belongs to the Mediator complex subunit 3 family. Component of the Mediator complex.

Its subcellular location is the nucleus. Functionally, component of the Mediator complex, a coactivator involved in regulated gene transcription of nearly all RNA polymerase II-dependent genes. Mediator functions as a bridge to convey information from gene-specific regulatory proteins to the basal RNA polymerase II transcription machinery. Mediator is recruited to promoters by direct interactions with regulatory proteins and serves as a scaffold for the assembly of a functional preinitiation complex with RNA polymerase II and the general transcription factors. The chain is Mediator of RNA polymerase II transcription subunit 3 (PGD1) from Kluyveromyces lactis (strain ATCC 8585 / CBS 2359 / DSM 70799 / NBRC 1267 / NRRL Y-1140 / WM37) (Yeast).